Reading from the N-terminus, the 220-residue chain is NAD(P)H-hydrate epimerase (220 aa).

One can recognise a YjeF N-terminal domain in the interval 6-203 (ARHLTTLATG…SFDLPEALFH (198 aa)). 53–57 (HNGGV) contributes to the (6S)-NADPHX binding site. K(+) contacts are provided by asparagine 54 and aspartate 116. Residues 120-126 (GMRLEGP) and aspartate 149 each bind (6S)-NADPHX. Threonine 152 serves as a coordination point for K(+).

The protein belongs to the NnrE/AIBP family. K(+) is required as a cofactor.

It catalyses the reaction (6R)-NADHX = (6S)-NADHX. The catalysed reaction is (6R)-NADPHX = (6S)-NADPHX. Its function is as follows. Catalyzes the epimerization of the S- and R-forms of NAD(P)HX, a damaged form of NAD(P)H that is a result of enzymatic or heat-dependent hydration. This is a prerequisite for the S-specific NAD(P)H-hydrate dehydratase to allow the repair of both epimers of NAD(P)HX. The protein is NAD(P)H-hydrate epimerase of Truepera radiovictrix (strain DSM 17093 / CIP 108686 / LMG 22925 / RQ-24).